The primary structure comprises 1366 residues: DNA-directed RNA polymerase subunit beta (1366 aa).

This sequence belongs to the RNA polymerase beta chain family. In terms of assembly, the RNAP catalytic core consists of 2 alpha, 1 beta, 1 beta' and 1 omega subunit. When a sigma factor is associated with the core the holoenzyme is formed, which can initiate transcription.

It carries out the reaction RNA(n) + a ribonucleoside 5'-triphosphate = RNA(n+1) + diphosphate. Functionally, DNA-dependent RNA polymerase catalyzes the transcription of DNA into RNA using the four ribonucleoside triphosphates as substrates. In Marinomonas sp. (strain MWYL1), this protein is DNA-directed RNA polymerase subunit beta.